A 463-amino-acid polypeptide reads, in one-letter code: Phosphomethylpyrimidine synthase (463 aa).

Substrate-binding positions include Asn80, Met109, Tyr138, His173, 193-195 (SRG), 234-237 (DGLR), and Glu273. Residue His277 participates in Zn(2+) binding. Residue Tyr300 participates in substrate binding. Residue His341 participates in Zn(2+) binding. Positions 421, 424, and 429 each coordinate [4Fe-4S] cluster.

Belongs to the ThiC family. Homodimer. The cofactor is [4Fe-4S] cluster.

The enzyme catalyses 5-amino-1-(5-phospho-beta-D-ribosyl)imidazole + S-adenosyl-L-methionine = 4-amino-2-methyl-5-(phosphooxymethyl)pyrimidine + CO + 5'-deoxyadenosine + formate + L-methionine + 3 H(+). It functions in the pathway cofactor biosynthesis; thiamine diphosphate biosynthesis. Its function is as follows. Catalyzes the synthesis of the hydroxymethylpyrimidine phosphate (HMP-P) moiety of thiamine from aminoimidazole ribotide (AIR) in a radical S-adenosyl-L-methionine (SAM)-dependent reaction. This is Phosphomethylpyrimidine synthase from Anaeromyxobacter dehalogenans (strain 2CP-1 / ATCC BAA-258).